The primary structure comprises 73 residues: Translation initiation factor IF-1 (73 aa).

The region spanning 1–73 is the S1-like domain; the sequence is MAKKDGVIEI…NRGRIVYRYR (73 aa).

The protein belongs to the IF-1 family. Component of the 30S ribosomal translation pre-initiation complex which assembles on the 30S ribosome in the order IF-2 and IF-3, IF-1 and N-formylmethionyl-tRNA(fMet); mRNA recruitment can occur at any time during PIC assembly.

It is found in the cytoplasm. Its function is as follows. One of the essential components for the initiation of protein synthesis. Stabilizes the binding of IF-2 and IF-3 on the 30S subunit to which N-formylmethionyl-tRNA(fMet) subsequently binds. Helps modulate mRNA selection, yielding the 30S pre-initiation complex (PIC). Upon addition of the 50S ribosomal subunit IF-1, IF-2 and IF-3 are released leaving the mature 70S translation initiation complex. In Acidothermus cellulolyticus (strain ATCC 43068 / DSM 8971 / 11B), this protein is Translation initiation factor IF-1.